The sequence spans 290 residues: D-tagatose 3-epimerase (290 aa).

Residue Cys66 participates in substrate binding. Glu152 acts as the Proton donor/acceptor in catalysis. Glu152 lines the Mn(2+) pocket. Residues Glu158 and Asp185–His188 contribute to the substrate site. Positions 185 and 211 each coordinate Mn(2+). Residue Arg217 coordinates substrate. Glu246 functions as the Proton donor/acceptor in the catalytic mechanism. Mn(2+) is bound at residue Glu246.

The protein belongs to the hyi family. Homodimer. It depends on Mn(2+) as a cofactor.

It carries out the reaction keto-D-tagatose = keto-D-sorbose. It catalyses the reaction D-allulose = keto-D-fructose. The enzyme catalyses D-ribulose = D-xylulose. With respect to regulation, strongly inhibited (about 90% of the enzyme activity) by Ag(+), Hg(2+) and p-chloromercuribenzoic acid. Cu(2+) and Zn(2+) inhibit about 60% of the enzyme activity. In terms of biological role, catalyzes the epimerization of various ketoses at the C(3) position. It is able to interconvert D-tagatose and D-ribulose to D-sorbose and D-xylulose, respectively. The enzyme is also able to accept other ketopentoses such as D-psicose with lower efficiency. The protein is D-tagatose 3-epimerase of Pseudomonas cichorii.